We begin with the raw amino-acid sequence, 187 residues long: Shikimate kinase (187 aa).

19–24 (GSGKST) provides a ligand contact to ATP. S23 is a binding site for Mg(2+). Substrate-binding residues include D41, R65, and G87. R124 contacts ATP. R143 serves as a coordination point for substrate. R160 lines the ATP pocket.

It belongs to the shikimate kinase family. Monomer. Mg(2+) is required as a cofactor.

It is found in the cytoplasm. It catalyses the reaction shikimate + ATP = 3-phosphoshikimate + ADP + H(+). It participates in metabolic intermediate biosynthesis; chorismate biosynthesis; chorismate from D-erythrose 4-phosphate and phosphoenolpyruvate: step 5/7. Catalyzes the specific phosphorylation of the 3-hydroxyl group of shikimic acid using ATP as a cosubstrate. The chain is Shikimate kinase from Rippkaea orientalis (strain PCC 8801 / RF-1) (Cyanothece sp. (strain PCC 8801)).